Here is a 2206-residue protein sequence, read N- to C-terminus: Genome polyprotein (2206 aa).

Gly-2 carries the N-myristoyl glycine; by host lipid modification. The Cytoplasmic portion of the chain corresponds to 2 to 1517 (GAQVSSQKVG…NINRAMTILQ (1516 aa)). Amphipathic alpha-helix stretches follow at residues 579-599 (GVDDLITEVAQNALALSLPKP) and 579-603 (GVDDLITEVAQNALALSLPKPQSNL). Residues His-898 and Asp-916 each act as for protease 2A activity in the active site. Residues Cys-933 and Cys-935 each contribute to the Zn(2+) site. Cys-987 serves as the catalytic For protease 2A activity. Cys-993 and His-995 together coordinate Zn(2+). Residues 1125-1197 (GDSWLKKFTE…HQSCPSQEHQ (73 aa)) form a membrane-binding region. The segment at 1125–1263 (GDSWLKKFTE…SPGTGKSVAT (139 aa)) is oligomerization. An RNA-binding region spans residues 1146 to 1150 (SNKIS). The SF3 helicase domain maps to 1229–1385 (EHTINNYIQF…SEYSRDGKLN (157 aa)). Residue 1253 to 1260 (GSPGTGKS) participates in ATP binding. Cys-1393, Cys-1396, Cys-1405, and Cys-1410 together coordinate Zn(2+). The segment at 1393-1410 (CKNCHQPANFKRCCPLVC) adopts a C4-type zinc-finger fold. Residues 1437–1444 (EKNRRSNI) are RNA-binding. Positions 1448–1453 (MEALFQ) are oligomerization. An intramembrane segment occupies 1518–1533 (AVTTFAAVAGVVYVMY). Over 1534-2206 (KLFAGHQGAY…TLYRRWLDSF (673 aa)) the chain is Cytoplasmic. Tyr-1543 carries the post-translational modification O-(5'-phospho-RNA)-tyrosine. Positions 1563–1741 (GPGFDYAVAM…FAAALKRSYF (179 aa)) constitute a Peptidase C3 domain. Residues His-1602, Glu-1633, and Cys-1709 each act as for protease 3C activity in the active site. Positions 1972-2087 (EKLFAFDYTG…SYPHEVDASL (116 aa)) constitute a RdRp catalytic domain. Residues Asp-1978 and Asp-2073 each contribute to the Mg(2+) site.

This sequence belongs to the picornaviruses polyprotein family. In terms of assembly, interacts with capsid protein VP1 and capsid protein VP3 to form heterotrimeric protomers. As to quaternary structure, interacts with capsid protein VP0, and capsid protein VP3 to form heterotrimeric protomers. Interacts with human PVR. Five protomers subsequently associate to form pentamers which serve as building blocks for the capsid. Interacts with capsid protein VP2, capsid protein VP3 and capsid protein VP4 following cleavage of capsid protein VP0. Interacts with capsid protein VP1 and capsid protein VP3 in the mature capsid. In terms of assembly, interacts with capsid protein VP0 and capsid protein VP1 to form heterotrimeric protomers. Five protomers subsequently associate to form pentamers which serve as building blocks for the capsid. Interacts with capsid protein VP4 in the mature capsid. Interacts with protein 2C; this interaction may be important for virion morphogenesis. As to quaternary structure, interacts with capsid protein VP1 and capsid protein VP3. Homodimer. In terms of assembly, homohexamer; forms a hexameric ring structure with 6-fold symmetry characteristic of AAA+ ATPases. Interacts (via N-terminus) with host RTN3 (via reticulon domain); this interaction is important for viral replication. Interacts with capsid protein VP3; this interaction may be important for virion morphogenesis. As to quaternary structure, interacts with protein 3CD. Homodimer. Interacts with host GBF1. Interacts (via GOLD domain) with host ACBD3 (via GOLD domain); this interaction allows the formation of a viral protein 3A/ACBD3 heterotetramer with a 2:2 stoichiometry, which will stimulate the recruitment of host PI4KB in order to synthesize PI4P at the viral RNA replication sites. In terms of assembly, interacts with RNA-directed RNA polymerase. As to quaternary structure, interacts with protein 3AB and with RNA-directed RNA polymerase. Interacts with Viral protein genome-linked and with protein 3CD. It depends on Mg(2+) as a cofactor. Post-translationally, specific enzymatic cleavages in vivo by the viral proteases yield processing intermediates and the mature proteins. In terms of processing, myristoylation is required for the formation of pentamers during virus assembly. Further assembly of 12 pentamers and a molecule of genomic RNA generates the provirion. During virion maturation, immature virions are rendered infectious following cleavage of VP0 into VP4 and VP2. This maturation seems to be an autocatalytic event triggered by the presence of RNA in the capsid and it is followed by a conformational change infectious virion. Post-translationally, myristoylation is required during RNA encapsidation and formation of the mature virus particle. In terms of processing, VPg is uridylylated by the polymerase into VPg-pUpU. This acts as a nucleotide-peptide primer for the genomic RNA replication.

It is found in the virion. Its subcellular location is the host cytoplasm. It localises to the host cytoplasmic vesicle membrane. The protein resides in the host nucleus. The enzyme catalyses a ribonucleoside 5'-triphosphate + H2O = a ribonucleoside 5'-diphosphate + phosphate + H(+). The catalysed reaction is Selective cleavage of Tyr-|-Gly bond in the picornavirus polyprotein.. It catalyses the reaction RNA(n) + a ribonucleoside 5'-triphosphate = RNA(n+1) + diphosphate. It carries out the reaction Selective cleavage of Gln-|-Gly bond in the poliovirus polyprotein. In other picornavirus reactions Glu may be substituted for Gln, and Ser or Thr for Gly.. With respect to regulation, replication or transcription is subject to high level of random mutations by the nucleotide analog ribavirin. Its function is as follows. Forms an icosahedral capsid of pseudo T=3 symmetry with capsid proteins VP2 and VP3. The capsid is 300 Angstroms in diameter, composed of 60 copies of each capsid protein and enclosing the viral positive strand RNA genome. Capsid protein VP1 mainly forms the vertices of the capsid. Capsid protein VP1 interacts with host cell receptor PVR to provide virion attachment to target host cells. This attachment induces virion internalization predominantly through clathrin- and caveolin-independent endocytosis in Hela cells and through caveolin-mediated endocytosis in brain microvascular endothelial cells. Tyrosine kinases are probably involved in the entry process. Virus binding to PVR induces increased junctional permeability and rearrangement of junctional proteins. Modulation of endothelial tight junctions, as well as cytolytic infection of endothelial cells themselves, may result in loss of endothelial integrity which may help the virus to reach the CNS. After binding to its receptor, the capsid undergoes conformational changes. Capsid protein VP1 N-terminus (that contains an amphipathic alpha-helix) and capsid protein VP4 are externalized. Together, they shape a pore in the host membrane through which viral genome is translocated to host cell cytoplasm. In terms of biological role, forms an icosahedral capsid of pseudo T=3 symmetry with capsid proteins VP2 and VP3. The capsid is 300 Angstroms in diameter, composed of 60 copies of each capsid protein and enclosing the viral positive strand RNA genome. Lies on the inner surface of the capsid shell. After binding to the host receptor, the capsid undergoes conformational changes. Capsid protein VP4 is released, Capsid protein VP1 N-terminus is externalized, and together, they shape a pore in the host membrane through which the viral genome is translocated into the host cell cytoplasm. Functionally, component of immature procapsids, which is cleaved into capsid proteins VP4 and VP2 after maturation. Allows the capsid to remain inactive before the maturation step. Its function is as follows. Cysteine protease that cleaves viral polyprotein and specific host proteins. It is responsible for the autocatalytic cleavage between the P1 and P2 regions, which is the first cleavage occurring in the polyprotein. Also cleaves the host translation initiation factor EIF4G1, in order to shut down the capped cellular mRNA translation. Inhibits the host nucleus-cytoplasm protein and RNA trafficking by cleaving host members of the nuclear pores including NUP98, NUP62 and NUP153. Counteracts stress granule formation probably by antagonizing its assembly or promoting its dissassembly. Cleaves and inhibits host IFIH1/MDA5, thereby inhibiting the type-I IFN production and the establishment of the antiviral state. Cleaves and inhibits host MAVS, thereby inhibiting the type-I IFN production and the establishment of the antiviral state. In terms of biological role, plays an essential role in the virus replication cycle by acting as a viroporin. Creates a pore in the host endoplasmic reticulum and as a consequence releases Ca2+ in the cytoplasm of infected cell. In turn, high levels of cytoplasmic calcium may trigger membrane trafficking and transport of viral ER-associated proteins to viroplasms, sites of viral genome replication. Induces and associates with structural rearrangements of intracellular membranes. Displays RNA-binding, nucleotide binding and NTPase activities. May play a role in virion morphogenesis and viral RNA encapsidation by interacting with the capsid protein VP3. Functionally, localizes the viral replication complex to the surface of membranous vesicles. Together with protein 3CD binds the Cis-Active RNA Element (CRE) which is involved in RNA synthesis initiation. Acts as a cofactor to stimulate the activity of 3D polymerase, maybe through a nucleid acid chaperone activity. Its function is as follows. Localizes the viral replication complex to the surface of membranous vesicles. It inhibits host cell endoplasmic reticulum-to-Golgi apparatus transport and causes the disassembly of the Golgi complex, possibly through GBF1 interaction. This would result in depletion of MHC, trail receptors and IFN receptors at the host cell surface. Plays an essential role in viral RNA replication by recruiting ACBD3 and PI4KB at the viral replication sites, thereby allowing the formation of the rearranged membranous structures where viral replication takes place. In terms of biological role, acts as a primer for viral RNA replication and remains covalently bound to viral genomic RNA. VPg is uridylylated prior to priming replication into VPg-pUpU. The oriI viral genomic sequence may act as a template for this. The VPg-pUpU is then used as primer on the genomic RNA poly(A) by the RNA-dependent RNA polymerase to replicate the viral genome. During genome replication, the VPg-RNA linkage is removed by the host TDP2, thereby accelerating replication. During the late stage of the replication cycle, host TDP2 is excluded from sites of viral RNA synthesis and encapsidation, allowing for the generation of progeny virions. Involved in the viral replication complex and viral polypeptide maturation. It exhibits protease activity with a specificity and catalytic efficiency that is different from protease 3C. Protein 3CD lacks polymerase activity. Protein 3CD binds to the 5'UTR of the viral genome. Functionally, major viral protease that mediates proteolytic processing of the polyprotein. Cleaves host EIF5B, contributing to host translation shutoff. Also cleaves host PABPC1, contributing to host translation shutoff. Cleaves host RIGI and thus contributes to the inhibition of type I interferon production. Cleaves host NLRP1, triggers host N-glycine-mediated degradation of the autoinhibitory NLRP1 N-terminal fragment. Inhibits the integrated stress response (ISR) in the infected cell by cleaving host G3BP1. Stress granule formation is thus inhibited, which allows protein synthesis and viral replication. Its function is as follows. Replicates the viral genomic RNA on the surface of intracellular membranes. May form linear arrays of subunits that propagate along a strong head-to-tail interaction called interface-I. Covalently attaches UMP to a tyrosine of VPg, which is used to prime RNA synthesis. The positive stranded RNA genome is first replicated at virus induced membranous vesicles, creating a dsRNA genomic replication form. This dsRNA is then used as template to synthesize positive stranded RNA genomes. ss(+)RNA genomes are either translated, replicated or encapsidated. This chain is Genome polyprotein, found in Poliovirus type 3 (strain 23127).